The sequence spans 95 residues: Co-chaperonin GroES (95 aa).

It belongs to the GroES chaperonin family. In terms of assembly, heptamer of 7 subunits arranged in a ring. Interacts with the chaperonin GroEL.

Its subcellular location is the cytoplasm. Together with the chaperonin GroEL, plays an essential role in assisting protein folding. The GroEL-GroES system forms a nano-cage that allows encapsulation of the non-native substrate proteins and provides a physical environment optimized to promote and accelerate protein folding. GroES binds to the apical surface of the GroEL ring, thereby capping the opening of the GroEL channel. In Rickettsia bellii (strain RML369-C), this protein is Co-chaperonin GroES.